A 209-amino-acid polypeptide reads, in one-letter code: Putative AgrB-like protein (209 aa).

Helical transmembrane passes span Ile-49–Gly-71, Ala-82–Leu-102, Tyr-105–Phe-125, Gln-149–Ile-169, and Ile-173–Gly-193.

This sequence belongs to the AgrB family.

The protein localises to the cell membrane. May be involved in the proteolytic processing of a quorum sensing system signal molecule precursor. In Clostridium acetobutylicum (strain ATCC 824 / DSM 792 / JCM 1419 / IAM 19013 / LMG 5710 / NBRC 13948 / NRRL B-527 / VKM B-1787 / 2291 / W), this protein is Putative AgrB-like protein.